The primary structure comprises 645 residues: DNA ligase (645 aa).

NAD(+)-binding positions include 30–34 (DDEYD), 79–80 (SM), and E106. Catalysis depends on K108, which acts as the N6-AMP-lysine intermediate. 3 residues coordinate NAD(+): R129, E163, and K302. Zn(2+) contacts are provided by C396, C399, C412, and C417. The BRCT domain maps to 570–645 (LKTNIFSGKT…IDESEYESLK (76 aa)).

This sequence belongs to the NAD-dependent DNA ligase family. LigA subfamily. Mg(2+) is required as a cofactor. Mn(2+) serves as cofactor.

It carries out the reaction NAD(+) + (deoxyribonucleotide)n-3'-hydroxyl + 5'-phospho-(deoxyribonucleotide)m = (deoxyribonucleotide)n+m + AMP + beta-nicotinamide D-nucleotide.. In terms of biological role, DNA ligase that catalyzes the formation of phosphodiester linkages between 5'-phosphoryl and 3'-hydroxyl groups in double-stranded DNA using NAD as a coenzyme and as the energy source for the reaction. It is essential for DNA replication and repair of damaged DNA. The protein is DNA ligase of Campylobacter fetus subsp. fetus (strain 82-40).